Here is a 158-residue protein sequence, read N- to C-terminus: NAD(P)H-quinone oxidoreductase subunit J, chloroplastic (158 aa).

The protein belongs to the complex I 30 kDa subunit family. As to quaternary structure, NDH is composed of at least 16 different subunits, 5 of which are encoded in the nucleus.

Its subcellular location is the plastid. It localises to the chloroplast thylakoid membrane. The enzyme catalyses a plastoquinone + NADH + (n+1) H(+)(in) = a plastoquinol + NAD(+) + n H(+)(out). The catalysed reaction is a plastoquinone + NADPH + (n+1) H(+)(in) = a plastoquinol + NADP(+) + n H(+)(out). NDH shuttles electrons from NAD(P)H:plastoquinone, via FMN and iron-sulfur (Fe-S) centers, to quinones in the photosynthetic chain and possibly in a chloroplast respiratory chain. The immediate electron acceptor for the enzyme in this species is believed to be plastoquinone. Couples the redox reaction to proton translocation, and thus conserves the redox energy in a proton gradient. This chain is NAD(P)H-quinone oxidoreductase subunit J, chloroplastic, found in Trachelium caeruleum (Blue throatwort).